Here is a 655-residue protein sequence, read N- to C-terminus: p-hydroxybenzoic acid efflux pump subunit AaeB (655 aa).

Over 1 to 12 the chain is Periplasmic; sequence MGIFSIANQHIR. Residues 13–33 traverse the membrane as a helical segment; sequence FAVKLACAIVLALFIGFHFQL. At 34–37 the chain is on the cytoplasmic side; that stretch reads ETPR. A helical membrane pass occupies residues 38 to 58; that stretch reads WAVLTAAIVAAGPAFAAGGEP. Residues 59 to 68 are Periplasmic-facing; that stretch reads YSGAIRYRGM. The helical transmembrane segment at 69–89 threads the bilayer; that stretch reads LRIIGTFIGCIAALIIIISMI. Residues 90–92 are Cytoplasmic-facing; that stretch reads RAP. Residues 93 to 113 traverse the membrane as a helical segment; the sequence is LLMILVCCVWAGFCTWISSLV. Over 114-120 the chain is Periplasmic; that stretch reads RIENSYA. The chain crosses the membrane as a helical span at residues 121 to 141; the sequence is WGLSGYTALIIVITIQTEPLL. The Cytoplasmic portion of the chain corresponds to 142-151; it reads TPQFALERCS. The helical transmembrane segment at 152–172 threads the bilayer; that stretch reads EIVIGIGCAILADLLFSPRSI. Residues 173–369 are Periplasmic-facing; sequence KQEVDRELDC…RTTLSCILGT (197 aa). Residues 370–390 form a helical membrane-spanning segment; that stretch reads LFWLWTGWTSGNGAMVMIAVV. The Cytoplasmic segment spans residues 391–406; sequence TSLAMRLPNPRMVCID. Residues 407–427 traverse the membrane as a helical segment; it reads FIYGTLAALPLGLLYFLVIIP. Over 428-430 the chain is Periplasmic; that stretch reads NTQ. The helical transmembrane segment at 431 to 451 threads the bilayer; sequence QSMLLLCLSLAVLGFFIGIEV. At 452 to 459 the chain is on the cytoplasmic side; that stretch reads QKRRLGSM. The chain crosses the membrane as a helical span at residues 460–480; sequence GALASTINIIVLDNPMTFHFI. Position 481 (Gln481) is a topological domain, periplasmic. A helical membrane pass occupies residues 482–502; sequence FLDSALGQIVGCMLAFIVILL. Over 503–655 the chain is Cytoplasmic; that stretch reads VRDKSKDRTG…HKYQNALTDS (153 aa).

This sequence belongs to the aromatic acid exporter ArAE (TC 2.A.85) family.

Its subcellular location is the cell inner membrane. Its function is as follows. Forms an efflux pump with AaeA. Could function as a metabolic relief valve, allowing to eliminate certain compounds when they accumulate to high levels in the cell. The chain is p-hydroxybenzoic acid efflux pump subunit AaeB from Salmonella typhi.